The chain runs to 499 residues: Endoglucanase 3 (499 aa).

Positions 1-19 (MALLRCLFLLAVLLPHRNA) are cleaved as a signal peptide. Asp-88 (nucleophile) is an active-site residue. Residues His-416, Asp-467, and Glu-476 contribute to the active site.

The protein belongs to the glycosyl hydrolase 9 (cellulase E) family. Expressed in flowers.

Its subcellular location is the secreted. The catalysed reaction is Endohydrolysis of (1-&gt;4)-beta-D-glucosidic linkages in cellulose, lichenin and cereal beta-D-glucans.. The sequence is that of Endoglucanase 3 (GLU8) from Oryza sativa subsp. japonica (Rice).